A 531-amino-acid chain; its full sequence is UDP-glucuronosyltransferase 1A7 (531 aa).

Positions M1–A25 are cleaved as a signal peptide. 3 N-linked (GlcNAc...) asparagine glycosylation sites follow: N71, N293, and N431. The helical transmembrane segment at L487–I503 threads the bilayer.

This sequence belongs to the UDP-glycosyltransferase family. In terms of assembly, homodimer. Homooligomer. Interacts with UGT1A1, UGT1A3, UGT1A4, UGT1A6, UGT1A8, UGT1A9 and UGT1A10 to form heterodimers.

Its subcellular location is the endoplasmic reticulum membrane. It catalyses the reaction glucuronate acceptor + UDP-alpha-D-glucuronate = acceptor beta-D-glucuronoside + UDP + H(+). The enzyme catalyses 17alpha-estradiol + UDP-alpha-D-glucuronate = 17alpha-estradiol 3-O-(beta-D-glucuronate) + UDP + H(+). The catalysed reaction is prunetin + UDP-alpha-D-glucuronate = prunetin-5-O-beta-D-glucuronide + UDP. It carries out the reaction 5-epi-5-F2t-IsoP + UDP-alpha-D-glucuronate = 5-epi-5-F2t-IsoP-glucuronide + UDP + H(+). It catalyses the reaction (E)-ferulate + UDP-alpha-D-glucuronate = (E)-ferulic acid beta-D-glucuronate ester + UDP. The enzyme catalyses candesartan + UDP-alpha-D-glucuronate = candesartan O-beta-D-glucuronoside + UDP. The catalysed reaction is SN-38 + UDP-alpha-D-glucuronate = SN-38 O-beta-D-glucuronide + UDP + H(+). It carries out the reaction mycophenolate + UDP-alpha-D-glucuronate = mycophenolate 7-O-beta-D-glucuronide + UDP + H(+). In terms of biological role, UDP-glucuronosyltransferase (UGT) that catalyzes phase II biotransformation reactions in which lipophilic substrates are conjugated with glucuronic acid to increase the metabolite's water solubility, thereby facilitating excretion into either the urine or bile. Essential for the elimination and detoxification of drugs, xenobiotics and endogenous compounds. Catalyzes the glucuronidation of endogenous estrogen hormone epiestradiol. Involved in the glucuronidation of F2-isoprostane (5-epi-5-F2t-IsoP). Involved in the glucuronidation of the phytochemical ferulic acid at the carboxylic acid group. Also catalyzes the glucuronidation of the isoflavones genistein, daidzein, glycitein, formononetin, biochanin A and prunetin, which are phytoestrogens with anticancer and cardiovascular properties. Involved in the glucuronidation of the AGTR1 angiotensin receptor antagonist caderastan, a drug which can inhibit the effect of angiotensin II. Involved in the biotransformation of 7-ethyl-10-hydroxycamptothecin (SN-38), the pharmacologically active metabolite of the anticancer drug irinotecan. Also metabolizes mycophenolate, an immunosuppressive agent. The chain is UDP-glucuronosyltransferase 1A7 from Rattus norvegicus (Rat).